A 194-amino-acid polypeptide reads, in one-letter code: dTTP/UTP pyrophosphatase (194 aa).

Asp69 serves as the catalytic Proton acceptor.

It belongs to the Maf family. YhdE subfamily. The cofactor is a divalent metal cation.

The protein resides in the cytoplasm. The catalysed reaction is dTTP + H2O = dTMP + diphosphate + H(+). The enzyme catalyses UTP + H2O = UMP + diphosphate + H(+). In terms of biological role, nucleoside triphosphate pyrophosphatase that hydrolyzes dTTP and UTP. May have a dual role in cell division arrest and in preventing the incorporation of modified nucleotides into cellular nucleic acids. This Moorella thermoacetica (strain ATCC 39073 / JCM 9320) protein is dTTP/UTP pyrophosphatase.